A 160-amino-acid chain; its full sequence is Cytochrome b6-f complex subunit 4 (160 aa).

3 consecutive transmembrane segments (helical) span residues 36 to 56 (LLYI…GLAV), 95 to 115 (LLGI…PFIE), and 128 to 148 (VAMT…IGAA).

The protein belongs to the cytochrome b family. PetD subfamily. As to quaternary structure, the 4 large subunits of the cytochrome b6-f complex are cytochrome b6, subunit IV (17 kDa polypeptide, PetD), cytochrome f and the Rieske protein, while the 4 small subunits are PetG, PetL, PetM and PetN. The complex functions as a dimer.

It is found in the cellular thylakoid membrane. Component of the cytochrome b6-f complex, which mediates electron transfer between photosystem II (PSII) and photosystem I (PSI), cyclic electron flow around PSI, and state transitions. The sequence is that of Cytochrome b6-f complex subunit 4 from Synechococcus sp. (strain CC9902).